A 1341-amino-acid chain; its full sequence is Aldehyde oxidase 4 (1341 aa).

Residues 8 to 95 (DELIFFVNGK…GAAVTTVEGV (88 aa)) enclose the 2Fe-2S ferredoxin-type domain. Positions 47, 52, 55, and 77 each coordinate [2Fe-2S] cluster. Q116 provides a ligand contact to Mo-molybdopterin. Positions 117, 120, 152, and 154 each coordinate [2Fe-2S] cluster. C154 is a binding site for Mo-molybdopterin. An FAD-binding PCMH-type domain is found at 239–424 (FQGERTTWLA…LSVFIPYSSQ (186 aa)). FAD-binding positions include 267–274 (LIMGNTTV), A348, T357, H361, D370, and V414. Mo-molybdopterin-binding positions include A805, 805–806 (AF), L1046, 1087–1090 (GSMG), Q1202, and L1266. Residue E1268 is the Proton acceptor; for azaheterocycle hydroxylase activity of the active site.

The protein belongs to the xanthine dehydrogenase family. Homodimer. [2Fe-2S] cluster serves as cofactor. The cofactor is FAD. Requires Mo-molybdopterin as cofactor. In terms of tissue distribution, detected in liver, testis, kidney, brain, Harderian gland and olfactory mucosa.

The protein resides in the cytoplasm. The enzyme catalyses an aldehyde + O2 + H2O = a carboxylate + H2O2 + H(+). It carries out the reaction retinal + O2 + H2O = retinoate + H2O2 + H(+). Its function is as follows. Aldehyde oxidase able to catalyze the oxidation of retinaldehyde into retinoate. Acts as a negative modulator of the epidermal trophism. May be able to oxidize a wide variety of aldehydes into their corresponding carboxylates and to hydroxylate azaheterocycles. The chain is Aldehyde oxidase 4 (AOX4) from Cavia porcellus (Guinea pig).